The following is a 1072-amino-acid chain: DNA-directed RNA polymerase subunit beta (1072 aa).

The protein belongs to the RNA polymerase beta chain family. As to quaternary structure, in plastids the minimal PEP RNA polymerase catalytic core is composed of four subunits: alpha, beta, beta', and beta''. When a (nuclear-encoded) sigma factor is associated with the core the holoenzyme is formed, which can initiate transcription.

It is found in the plastid. It localises to the chloroplast. It carries out the reaction RNA(n) + a ribonucleoside 5'-triphosphate = RNA(n+1) + diphosphate. Its function is as follows. DNA-dependent RNA polymerase catalyzes the transcription of DNA into RNA using the four ribonucleoside triphosphates as substrates. The polypeptide is DNA-directed RNA polymerase subunit beta (Barbarea verna (Land cress)).